We begin with the raw amino-acid sequence, 172 residues long: RNA pyrophosphohydrolase (172 aa).

The Nudix hydrolase domain occupies Q8–A153. The short motif at G43–G64 is the Nudix box element.

The protein belongs to the Nudix hydrolase family. RppH subfamily. A divalent metal cation is required as a cofactor.

Accelerates the degradation of transcripts by removing pyrophosphate from the 5'-end of triphosphorylated RNA, leading to a more labile monophosphorylated state that can stimulate subsequent ribonuclease cleavage. This chain is RNA pyrophosphohydrolase, found in Caulobacter vibrioides (strain ATCC 19089 / CIP 103742 / CB 15) (Caulobacter crescentus).